The sequence spans 453 residues: Phosphoglucosamine mutase (453 aa).

The Phosphoserine intermediate role is filled by S100. Residues S100, D239, D241, and D243 each contribute to the Mg(2+) site. At S100 the chain carries Phosphoserine.

The protein belongs to the phosphohexose mutase family. Mg(2+) serves as cofactor. Post-translationally, activated by phosphorylation.

It catalyses the reaction alpha-D-glucosamine 1-phosphate = D-glucosamine 6-phosphate. Its function is as follows. Catalyzes the conversion of glucosamine-6-phosphate to glucosamine-1-phosphate. In Buchnera aphidicola subsp. Baizongia pistaciae (strain Bp), this protein is Phosphoglucosamine mutase.